The sequence spans 62 residues: Large ribosomal subunit protein bL35 (62 aa).

Residues 31-62 (HLAQNKTTKQKRQSRKSAQMHSSDLKRFKALI) form a disordered region. The span at 53–62 (SDLKRFKALI) shows a compositional bias: basic and acidic residues.

It belongs to the bacterial ribosomal protein bL35 family.

The sequence is that of Large ribosomal subunit protein bL35 from Mycoplasmopsis agalactiae (strain NCTC 10123 / CIP 59.7 / PG2) (Mycoplasma agalactiae).